The sequence spans 391 residues: MARVGVLLLNLGGPERIKDVGPFLYNLFSDPEIIRLPVRAFQKPLAWLISLLRSSKSQEAYRSIGGGSPLRRITEQQARELQSYLRNIGIDATTYVAMRYWHPFTESAVADMKADGVSEVVVLPLYPHFSISTSGSSFRELKRLKDSDDEFAELSIRCIRSWFDHPAYVSSMAELIKKQILACDLPQESHVFFTAHGVPKSYVEEAGDPYQDQIQNCSLLIIDQLENSLGFTNSFSLAYQSRVGPEEWLKPYTEEVLEKLGKSGVKELVVVPISFVSEHIETLQEIDIEYKEIAQKNGIVNFKRVPALDIYPLFIEGLADLVSSCLNGEGISLEEASKLPERVKLYPQEKWQWGWNNSSEVWNGRVAMIVFLCFLMELIIGGGPLHQIGLL.

Fe cation is bound by residues His-196 and Glu-281.

Belongs to the ferrochelatase family.

The protein localises to the cytoplasm. The catalysed reaction is heme b + 2 H(+) = protoporphyrin IX + Fe(2+). The protein operates within porphyrin-containing compound metabolism; protoheme biosynthesis; protoheme from protoporphyrin-IX: step 1/1. Catalyzes the ferrous insertion into protoporphyrin IX. The protein is Ferrochelatase of Prochlorococcus marinus (strain NATL1A).